Here is a 232-residue protein sequence, read N- to C-terminus: tRNA1(Val) (adenine(37)-N6)-methyltransferase (232 aa).

This sequence belongs to the methyltransferase superfamily. tRNA (adenine-N(6)-)-methyltransferase family.

The protein localises to the cytoplasm. The catalysed reaction is adenosine(37) in tRNA1(Val) + S-adenosyl-L-methionine = N(6)-methyladenosine(37) in tRNA1(Val) + S-adenosyl-L-homocysteine + H(+). Specifically methylates the adenine in position 37 of tRNA(1)(Val) (anticodon cmo5UAC). In Haemophilus influenzae (strain ATCC 51907 / DSM 11121 / KW20 / Rd), this protein is tRNA1(Val) (adenine(37)-N6)-methyltransferase.